Consider the following 622-residue polypeptide: Basal cell adhesion molecule (622 aa).

An N-terminal signal peptide occupies residues 1–25 (MEPPDARAGLLWLTFLLSGYSGAQA). 2 consecutive Ig-like V-type domains span residues 26–135 (ELHV…SSVR) and 140–250 (PEDT…HTFR). The Extracellular segment spans residues 26–541 (ELHVSVPPRV…GSVAPQTAQA (516 aa)). 3 disulfide bridges follow: C47–C118, C165–C230, and C284–C330. 3 Ig-like C2-type domains span residues 267–342 (PSTT…EEVQ), 356–435 (PLEL…QSFQ), and 442–532 (PELK…FHFG). 4 N-linked (GlcNAc...) asparagine glycosylation sites follow: N314, N323, N370, and N377. 2 disulfides stabilise this stretch: C378/C418 and C467/C516. A helical membrane pass occupies residues 542–562 (GVAVMAVAVSVGLLLLVVAAF). At 563-622 (YCMRRKGRPGCCRRAEKGAPPAREPELSHSGSERPEHTGLLMGGPSGGGRGGSGGFGDEC) the chain is on the cytoplasmic side. The segment at 574–622 (CRRAEKGAPPAREPELSHSGSERPEHTGLLMGGPSGGGRGGSGGFGDEC) is disordered. Over residues 575–599 (RRAEKGAPPAREPELSHSGSERPEH) the composition is skewed to basic and acidic residues. Phosphoserine occurs at positions 590, 592, 594, and 615. Residues 603–622 (LMGGPSGGGRGGSGGFGDEC) show a composition bias toward gly residues.

As to quaternary structure, homodimer. Interacts with ITGA4:ITGB1. Interacts with spectrins SPTA1 and SPTB1. Post-translationally, epinephrine-stimulated phosphorylation of Ser-615 by PKA enhances adhesion to laminin. Ser-615 can also be phosphorylated by AKT1.

The protein localises to the cell membrane. Its function is as follows. Transmembrane glycoprotein that functions as both a receptor and an adhesion molecule playing a crucial role in cell adhesion, motility, migration and invasion. Extracellular domain enables binding to extracellular matrix proteins, such as laminin, integrin and other ligands while its intracellular domain interacts with cytoskeletal proteins like hemoglobin, facilitating cell signal transduction. Serves as a receptor for laminin alpha-5/LAMA5 to promote cell adhesion. Mechanistically, JAK2 induces BCAM phosphorylation and activates its adhesion to laminin by stimulating a Rap1/AKT signaling pathway in the absence of EPOR. The chain is Basal cell adhesion molecule (Bcam) from Mus musculus (Mouse).